Consider the following 238-residue polypeptide: 2-C-methyl-D-erythritol 4-phosphate cytidylyltransferase (238 aa).

This sequence belongs to the IspD/TarI cytidylyltransferase family. IspD subfamily.

It catalyses the reaction 2-C-methyl-D-erythritol 4-phosphate + CTP + H(+) = 4-CDP-2-C-methyl-D-erythritol + diphosphate. It participates in isoprenoid biosynthesis; isopentenyl diphosphate biosynthesis via DXP pathway; isopentenyl diphosphate from 1-deoxy-D-xylulose 5-phosphate: step 2/6. Catalyzes the formation of 4-diphosphocytidyl-2-C-methyl-D-erythritol from CTP and 2-C-methyl-D-erythritol 4-phosphate (MEP). This Acinetobacter baumannii (strain AYE) protein is 2-C-methyl-D-erythritol 4-phosphate cytidylyltransferase.